The sequence spans 224 residues: UPF0758 protein Tbd_2588 (224 aa).

The region spanning 102-224 (ALSSPAAVRD…ALSFAEAGHL (123 aa)) is the MPN domain. Zn(2+) is bound by residues His173, His175, and Asp186. Positions 173–186 (HNHPSGVNEPSQAD) match the JAMM motif motif.

The protein belongs to the UPF0758 family.

The sequence is that of UPF0758 protein Tbd_2588 from Thiobacillus denitrificans (strain ATCC 25259 / T1).